A 105-amino-acid polypeptide reads, in one-letter code: Nitrogen fixation nifHD region GlnB-like protein 1 (105 aa).

This sequence belongs to the P(II) protein family.

In terms of biological role, could be involved in the regulation of nitrogen fixation. The protein is Nitrogen fixation nifHD region GlnB-like protein 1 (glnBA) of Methanobacterium ivanovii.